The sequence spans 368 residues: Abasic site processing protein YMR114C (368 aa).

Cys2 serves as the catalytic Nucleophile. Cys2 is subject to Thiazolidine linkage to a ring-opened DNA abasic site. The interval 25–48 (VNTPKDASSNSQHPHDEEDTKDQP) is disordered. A compositionally biased stretch (basic and acidic residues) spans 37–46 (HPHDEEDTKD). Residue Glu132 is part of the active site. Residues 270–368 (LENDNEQGID…DSRGKKKIKK (99 aa)) form a disordered region. 3 stretches are compositionally biased toward basic and acidic residues: residues 281 to 296 (RGVK…DVFN), 304 to 313 (NSYDGLKKNE), and 326 to 349 (IGDR…EKRN). Phosphoserine is present on Ser338.

This sequence belongs to the SOS response-associated peptidase family.

Its subcellular location is the chromosome. With respect to regulation, formation and reversal of DNA-protein cross-link depends on DNA context. Catalyzes formation of the thiazolidine linkage in presence of abasic sites in single-stranded DNA. Mediates the reversal of the thiazolidine cross-link in presence of double stranded DNA. In terms of biological role, sensor of abasic sites in single-stranded DNA (ssDNA) required to preserve genome integrity by promoting error-free repair of abasic sites. Recognizes and binds abasic sites in ssDNA at replication forks and chemically modifies the lesion by forming a covalent cross-link with DNA: forms a stable thiazolidine linkage between a ring-opened abasic site and the alpha-amino and sulfhydryl substituents of its N-terminal catalytic cysteine residue. The DNA-protein cross-link is then reversed: able to catalyze the reversal of the thiazolidine cross-link and cycle between a cross-link and a non-cross-linked state depending on DNA context: mediates self-reversal of the thiazolidine cross-link in double stranded DNA. Acts as a protease: mediates autocatalytic processing of its N-terminal methionine in order to expose the catalytic cysteine. This chain is Abasic site processing protein YMR114C, found in Saccharomyces cerevisiae (strain ATCC 204508 / S288c) (Baker's yeast).